Here is a 1157-residue protein sequence, read N- to C-terminus: Peroxisomal ATPase PEX1 (1157 aa).

Disordered stretches follow at residues 187–221 (SISS…NNGE) and 1135–1157 (SGRD…STLM). Positions 205 to 217 (SSTSTATGRRSVT) are enriched in low complexity.

It belongs to the AAA ATPase family. As to quaternary structure, interacts with PEX6; forming the PEX1-PEX6 AAA ATPase complex, which is composed of a heterohexamer formed by a trimer of PEX1-PEX6 dimers.

It localises to the membrane. It catalyses the reaction ATP + H2O = ADP + phosphate + H(+). In terms of biological role, component of the PEX1-PEX6 AAA ATPase complex involved in peroxisome biosynthesis. The complex acts as a protein dislocase complex that mediates the ATP-dependent extraction of the PEX5 receptor from peroxisomal membranes, an essential step for PEX5 recycling. Specifically recognizes PEX5 monoubiquitinated at 'Cys-6', and pulls it out of the peroxisome lumen through the PEX2-PEX10-PEX12 retrotranslocation channel. Extraction by the PEX1-PEX6 AAA ATPase complex is accompanied by unfolding of the TPR repeats and release of bound cargo from PEX5. The polypeptide is Peroxisomal ATPase PEX1 (Komagataella pastoris (Yeast)).